The primary structure comprises 273 residues: Putative deoxyribonuclease TATDN1 homolog (273 aa).

Residues glutamate 91, histidine 125, histidine 147, and aspartate 195 each contribute to the a divalent metal cation site.

The protein belongs to the metallo-dependent hydrolases superfamily. TatD-type hydrolase family. It depends on a divalent metal cation as a cofactor.

The protein resides in the nucleus. Its function is as follows. Putative deoxyribonuclease. This is Putative deoxyribonuclease TATDN1 homolog from Encephalitozoon cuniculi (strain GB-M1) (Microsporidian parasite).